We begin with the raw amino-acid sequence, 211 residues long: Uridine kinase (211 aa).

12–19 is an ATP binding site; the sequence is GGSGSGKT.

Belongs to the uridine kinase family.

It localises to the cytoplasm. The catalysed reaction is uridine + ATP = UMP + ADP + H(+). The enzyme catalyses cytidine + ATP = CMP + ADP + H(+). It participates in pyrimidine metabolism; CTP biosynthesis via salvage pathway; CTP from cytidine: step 1/3. It functions in the pathway pyrimidine metabolism; UMP biosynthesis via salvage pathway; UMP from uridine: step 1/1. This Anoxybacillus flavithermus (strain DSM 21510 / WK1) protein is Uridine kinase.